Consider the following 101-residue polypeptide: Urease subunit beta (101 aa).

The protein belongs to the urease beta subunit family. In terms of assembly, heterotrimer of UreA (gamma), UreB (beta) and UreC (alpha) subunits. Three heterotrimers associate to form the active enzyme.

The protein resides in the cytoplasm. It carries out the reaction urea + 2 H2O + H(+) = hydrogencarbonate + 2 NH4(+). It functions in the pathway nitrogen metabolism; urea degradation; CO(2) and NH(3) from urea (urease route): step 1/1. In Haemophilus influenzae (strain 86-028NP), this protein is Urease subunit beta.